Here is a 148-residue protein sequence, read N- to C-terminus: MSVLTEFKAFAVKGNVVDMAVGIIIGAAFGKIVSSFVGDVIMPPLGLLIGGVDFSDLAVTLRPAQGTAPAVLLAYGKFIQTVIDFIIVAFAIFMGVKAINRLKREEAKAPTLPPTPSKQEVLLSEIRDLLKAQNTPAAPITVDPARTL.

Transmembrane regions (helical) follow at residues 9-29 (AFAVKGNVVDMAVGIIIGAAF) and 79-99 (IQTVIDFIIVAFAIFMGVKAI).

It belongs to the MscL family. Homopentamer.

It is found in the cell inner membrane. Channel that opens in response to stretch forces in the membrane lipid bilayer. May participate in the regulation of osmotic pressure changes within the cell. This Pseudomonas syringae pv. tomato (strain ATCC BAA-871 / DC3000) protein is Large-conductance mechanosensitive channel.